Here is a 110-residue protein sequence, read N- to C-terminus: Large ribosomal subunit protein uL22 (110 aa).

The protein belongs to the universal ribosomal protein uL22 family. Part of the 50S ribosomal subunit.

Its function is as follows. This protein binds specifically to 23S rRNA; its binding is stimulated by other ribosomal proteins, e.g. L4, L17, and L20. It is important during the early stages of 50S assembly. It makes multiple contacts with different domains of the 23S rRNA in the assembled 50S subunit and ribosome. In terms of biological role, the globular domain of the protein is located near the polypeptide exit tunnel on the outside of the subunit, while an extended beta-hairpin is found that lines the wall of the exit tunnel in the center of the 70S ribosome. The polypeptide is Large ribosomal subunit protein uL22 (Klebsiella pneumoniae (strain 342)).